The sequence spans 360 residues: LETM1 domain-containing protein 1 (360 aa).

Positions 1–110 are required and sufficient for mitochondrial import; it reads MALSRVCWAR…KKARRIKTNM (110 aa). The Cytoplasmic portion of the chain corresponds to 1-137; that stretch reads MALSRVCWAR…LRQFRQDVTK (137 aa). Residues 138-158 traverse the membrane as a helical segment; the sequence is CLFLGIISIPPFANYLVFLLM. Residues 159–360 lie on the Mitochondrial intermembrane side of the membrane; that stretch reads YLFPRQLLIR…LSTNYLGTRR (202 aa). Positions 186–360 constitute a Letm1 RBD domain; the sequence is FRKQSHPEII…LSTNYLGTRR (175 aa).

As to quaternary structure, interacts with BRI3BP. Interacts (via C-terminal) with SMARCA4; the interaction regulates transcriptional expression of thermogenic genes in brown adipose tissue. Kidney, liver, skeletal muscle, heart and brain. Overexpressed in various tumors including leukemia, lymphoma, and carcinomas of the breast, kidney, ovary, stomach, colon and uterine cervix.

It localises to the mitochondrion outer membrane. It is found in the nucleus. The protein localises to the mitochondrion inner membrane. Plays an essential role for mitochondrial structure and function, as well as thermogenesis of brown adipocytes. In brown adipose tissue also localizes in the nucleus where it interacts with the chromatin remodeler SMARCA4 to regulate thermogenic genes expression, such as UCP1. May regulate phagocytosis and inflammatory responses to lipopolysaccharide in macrophages. Involved in tumorigenesis and may function as a negative regulator of the p53/TP53. The polypeptide is LETM1 domain-containing protein 1 (Homo sapiens (Human)).